A 479-amino-acid chain; its full sequence is Aspartyl/glutamyl-tRNA(Asn/Gln) amidotransferase subunit B (479 aa).

It belongs to the GatB/GatE family. GatB subfamily. As to quaternary structure, heterotrimer of A, B and C subunits.

It catalyses the reaction L-glutamyl-tRNA(Gln) + L-glutamine + ATP + H2O = L-glutaminyl-tRNA(Gln) + L-glutamate + ADP + phosphate + H(+). The catalysed reaction is L-aspartyl-tRNA(Asn) + L-glutamine + ATP + H2O = L-asparaginyl-tRNA(Asn) + L-glutamate + ADP + phosphate + 2 H(+). Allows the formation of correctly charged Asn-tRNA(Asn) or Gln-tRNA(Gln) through the transamidation of misacylated Asp-tRNA(Asn) or Glu-tRNA(Gln) in organisms which lack either or both of asparaginyl-tRNA or glutaminyl-tRNA synthetases. The reaction takes place in the presence of glutamine and ATP through an activated phospho-Asp-tRNA(Asn) or phospho-Glu-tRNA(Gln). The chain is Aspartyl/glutamyl-tRNA(Asn/Gln) amidotransferase subunit B from Mycoplasma mycoides subsp. mycoides SC (strain CCUG 32753 / NCTC 10114 / PG1).